The following is a 94-amino-acid chain: Transcription factor CPC (94 aa).

The interval 1–10 (MFRSDKAEKM) is S1, required for cell-to-cell movements. Basic and acidic residues predominate over residues 1–11 (MFRSDKAEKMD). Positions 1-25 (MFRSDKAEKMDKRRRRQSKAKASCS) are disordered. Residues 30–80 (SIEWEAVKMSEEEEDLISRMYKLVGDRWELIAGRIPGRTPEEIERYWLMKH) form the Myb-like domain. Residues 76-79 (WLMK) form an S2, required for cell-to-cell movements and nuclear localization region.

Interacts with GL3 and BHLH2. Interacts with SIEL. As to expression, expressed in trichomes and in young developing leaves, as well as in root hair and stele cells (pericycle and vascular tissues). Expressed in epidermal root hairless cells (atrichoblasts) and moves to root hair cells (trichoblasts) by a cell-to-cell movement through plasmodesmata (at protein level).

Its subcellular location is the nucleus. Functionally, transcription factor. Determines the fate of epidermal cell differentiation. Represses trichome development by lateral inhibition. Together with GL3 or BHLH2, promotes the formation of hair developing cells (H position) in root epidermis, probably by inhibiting non-hair cell formation. Represses the expression of GL2 and WER in H cells. Positively regulates stomatal formation in the hypocotyl. The protein is Transcription factor CPC (CPC) of Arabidopsis thaliana (Mouse-ear cress).